Here is a 361-residue protein sequence, read N- to C-terminus: Phosphoserine aminotransferase (361 aa).

Arginine 42 contributes to the L-glutamate binding site. Residues 76 to 77 (AT), tryptophan 102, threonine 152, aspartate 172, and glutamine 195 contribute to the pyridoxal 5'-phosphate site. An N6-(pyridoxal phosphate)lysine modification is found at lysine 196. 237-238 (NT) lines the pyridoxal 5'-phosphate pocket.

It belongs to the class-V pyridoxal-phosphate-dependent aminotransferase family. SerC subfamily. In terms of assembly, homodimer. It depends on pyridoxal 5'-phosphate as a cofactor.

It localises to the cytoplasm. It catalyses the reaction O-phospho-L-serine + 2-oxoglutarate = 3-phosphooxypyruvate + L-glutamate. The enzyme catalyses 4-(phosphooxy)-L-threonine + 2-oxoglutarate = (R)-3-hydroxy-2-oxo-4-phosphooxybutanoate + L-glutamate. Its pathway is amino-acid biosynthesis; L-serine biosynthesis; L-serine from 3-phospho-D-glycerate: step 2/3. It participates in cofactor biosynthesis; pyridoxine 5'-phosphate biosynthesis; pyridoxine 5'-phosphate from D-erythrose 4-phosphate: step 3/5. In terms of biological role, catalyzes the reversible conversion of 3-phosphohydroxypyruvate to phosphoserine and of 3-hydroxy-2-oxo-4-phosphonooxybutanoate to phosphohydroxythreonine. The chain is Phosphoserine aminotransferase from Stenotrophomonas maltophilia (strain R551-3).